Reading from the N-terminus, the 762-residue chain is 5-methyltetrahydropteroyltriglutamate--homocysteine methyltransferase (762 aa).

5-methyltetrahydropteroyltri-L-glutamate is bound by residues 17–20 and lysine 111; that span reads REWK. L-homocysteine contacts are provided by residues 435–437 and glutamate 488; that span reads IGS. L-methionine-binding positions include 435–437 and glutamate 488; that span reads IGS. 5-methyltetrahydropteroyltri-L-glutamate contacts are provided by residues 519-520 and tryptophan 565; that span reads RC. Residue aspartate 603 coordinates L-homocysteine. Residue aspartate 603 coordinates L-methionine. Position 609 (glutamate 609) interacts with 5-methyltetrahydropteroyltri-L-glutamate. 3 residues coordinate Zn(2+): histidine 645, cysteine 647, and glutamate 669. Residue histidine 698 is the Proton donor of the active site. Residue cysteine 730 coordinates Zn(2+).

It belongs to the vitamin-B12 independent methionine synthase family. It depends on Zn(2+) as a cofactor.

It carries out the reaction 5-methyltetrahydropteroyltri-L-glutamate + L-homocysteine = tetrahydropteroyltri-L-glutamate + L-methionine. It functions in the pathway amino-acid biosynthesis; L-methionine biosynthesis via de novo pathway; L-methionine from L-homocysteine (MetE route): step 1/1. Its function is as follows. Catalyzes the transfer of a methyl group from 5-methyltetrahydrofolate to homocysteine resulting in methionine formation. This Bacillus mycoides (strain KBAB4) (Bacillus weihenstephanensis) protein is 5-methyltetrahydropteroyltriglutamate--homocysteine methyltransferase.